A 167-amino-acid polypeptide reads, in one-letter code: 2-C-methyl-D-erythritol 2,4-cyclodiphosphate synthase (167 aa).

Positions 9 and 11 each coordinate a divalent metal cation. Residues Asp9 to His11 and His35 to Ser36 contribute to the 4-CDP-2-C-methyl-D-erythritol 2-phosphate site. His43 contacts a divalent metal cation. Residues Asp57–Gly59, Phe62–Asp66, Thr133–Glu136, Phe140, and Arg143 contribute to the 4-CDP-2-C-methyl-D-erythritol 2-phosphate site.

This sequence belongs to the IspF family. In terms of assembly, homotrimer. The cofactor is a divalent metal cation.

The catalysed reaction is 4-CDP-2-C-methyl-D-erythritol 2-phosphate = 2-C-methyl-D-erythritol 2,4-cyclic diphosphate + CMP. It participates in isoprenoid biosynthesis; isopentenyl diphosphate biosynthesis via DXP pathway; isopentenyl diphosphate from 1-deoxy-D-xylulose 5-phosphate: step 4/6. In terms of biological role, involved in the biosynthesis of isopentenyl diphosphate (IPP) and dimethylallyl diphosphate (DMAPP), two major building blocks of isoprenoid compounds. Catalyzes the conversion of 4-diphosphocytidyl-2-C-methyl-D-erythritol 2-phosphate (CDP-ME2P) to 2-C-methyl-D-erythritol 2,4-cyclodiphosphate (ME-CPP) with a corresponding release of cytidine 5-monophosphate (CMP). This is 2-C-methyl-D-erythritol 2,4-cyclodiphosphate synthase from Glaesserella parasuis serovar 5 (strain SH0165) (Haemophilus parasuis).